Reading from the N-terminus, the 488-residue chain is E3 ubiquitin-protein ligase TRIM39 (488 aa).

The segment at 29 to 70 (CSVCLEYLKEPVIIECGHNFCKACITRWWEDLERDFPCPVCR) adopts an RING-type zinc-finger fold. The B box-type zinc finger occupies 102–143 (RDESLCSQHHEPLSLFCYEDQEAVCLICAISHTHRPHTVVPM). Zn(2+) is bound by residues Cys107, His110, Cys129, and His135. Positions 181–250 (ELKRLVESRR…AHLAAEVEGK (70 aa)) form a coiled coil. 2 interaction with CDKN1A regions span residues 268–307 (KCEK…QLIA) and 359–488 (TSGR…TDWE). The region spanning 289–484 (SNFPRQYFAL…NAAPLTIRPP (196 aa)) is the B30.2/SPRY domain.

It belongs to the TRIM/RBCC family. In terms of assembly, interacts with MOAP1. Interacts with CDKN1A. Post-translationally, autoubiquitinated.

It is found in the cytoplasm. It localises to the cytosol. Its subcellular location is the mitochondrion. The protein resides in the nucleus. It catalyses the reaction S-ubiquitinyl-[E2 ubiquitin-conjugating enzyme]-L-cysteine + [acceptor protein]-L-lysine = [E2 ubiquitin-conjugating enzyme]-L-cysteine + N(6)-ubiquitinyl-[acceptor protein]-L-lysine.. It functions in the pathway protein modification; protein ubiquitination. In terms of biological role, E3 ubiquitin-protein ligase. May facilitate apoptosis by inhibiting APC/C-Cdh1-mediated poly-ubiquitination and subsequent proteasome-mediated degradation of the pro-apoptotic protein MOAP1. Regulates the G1/S transition of the cell cycle and DNA damage-induced G2 arrest by stabilizing CDKN1A/p21. Positively regulates CDKN1A/p21 stability by competing with DTL for CDKN1A/p21 binding, therefore disrupting DCX(DTL) E3 ubiquitin ligase complex-mediated CDKN1A/p21 ubiquitination and degradation. The polypeptide is E3 ubiquitin-protein ligase TRIM39 (Trim39) (Mus musculus (Mouse)).